Here is a 221-residue protein sequence, read N- to C-terminus: Ribosomal RNA small subunit methyltransferase Nep1 (221 aa).

S-adenosyl-L-methionine-binding positions include Gly174, Gly179, and 196–201 (IGDETM).

Belongs to the class IV-like SAM-binding methyltransferase superfamily. RNA methyltransferase NEP1 family. As to quaternary structure, homodimer.

It carries out the reaction a pseudouridine in rRNA + S-adenosyl-L-methionine = an N(1)-methylpseudouridine in rRNA + S-adenosyl-L-homocysteine + H(+). Its function is as follows. Methyltransferase involved in ribosomal biogenesis. Specifically catalyzes the N1-methylation of the pseudouridine corresponding to position 914 in M.jannaschii 16S rRNA. The protein is Ribosomal RNA small subunit methyltransferase Nep1 of Pyrobaculum islandicum (strain DSM 4184 / JCM 9189 / GEO3).